A 332-amino-acid chain; its full sequence is Glyceraldehyde-3-phosphate dehydrogenase 1 (332 aa).

NAD(+) is bound by residues 11–12 (RI), D33, and R78. D-glyceraldehyde 3-phosphate-binding positions include 149–151 (SCT), T180, 209–210 (TG), and R232. Residue C150 is the Nucleophile of the active site. Residue N314 participates in NAD(+) binding.

This sequence belongs to the glyceraldehyde-3-phosphate dehydrogenase family. As to quaternary structure, homotetramer.

Its subcellular location is the cytoplasm. It catalyses the reaction D-glyceraldehyde 3-phosphate + phosphate + NAD(+) = (2R)-3-phospho-glyceroyl phosphate + NADH + H(+). It participates in carbohydrate degradation; glycolysis; pyruvate from D-glyceraldehyde 3-phosphate: step 1/5. This is Glyceraldehyde-3-phosphate dehydrogenase 1 (GPD1) from Candida glabrata (strain ATCC 2001 / BCRC 20586 / JCM 3761 / NBRC 0622 / NRRL Y-65 / CBS 138) (Yeast).